Reading from the N-terminus, the 287-residue chain is Diphthine methyl ester synthase (287 aa).

Residues Leu9, Asp84, Gly87, 112-113 (SI), Leu163, Val221, and His248 each bind S-adenosyl-L-methionine.

This sequence belongs to the diphthine synthase family.

The protein resides in the cytoplasm. The enzyme catalyses 2-[(3S)-amino-3-carboxypropyl]-L-histidyl-[translation elongation factor 2] + 4 S-adenosyl-L-methionine = diphthine methyl ester-[translation elongation factor 2] + 4 S-adenosyl-L-homocysteine + 3 H(+). The protein operates within protein modification; peptidyl-diphthamide biosynthesis. In terms of biological role, S-adenosyl-L-methionine-dependent methyltransferase that catalyzes four methylations of the modified target histidine residue in translation elongation factor 2 (EF-2), to form an intermediate called diphthine methyl ester. The four successive methylation reactions represent the second step of diphthamide biosynthesis. In Neurospora crassa (strain ATCC 24698 / 74-OR23-1A / CBS 708.71 / DSM 1257 / FGSC 987), this protein is Diphthine methyl ester synthase (dph-5).